Reading from the N-terminus, the 250-residue chain is Enoyl-[acyl-carrier-protein] reductase [NADPH] FabL (250 aa).

NADP(+)-binding positions include 13-16 (SRGV), 36-38 (ARS), 62-63 (NV), and asparagine 89. Active-site proton acceptor residues include tyrosine 151 and lysine 158. NADP(+)-binding positions include lysine 158 and 187–189 (IDT).

The protein belongs to the short-chain dehydrogenases/reductases (SDR) family. As to quaternary structure, homotetramer.

It carries out the reaction a 2,3-saturated acyl-[ACP] + NADP(+) = a (2E)-enoyl-[ACP] + NADPH + H(+). The catalysed reaction is (2E)-butenoyl-[ACP] + NADPH + H(+) = butanoyl-[ACP] + NADP(+). It participates in lipid metabolism; fatty acid biosynthesis. With respect to regulation, inhibited by triclosan. Functionally, catalyzes the reduction of a carbon-carbon double bond in an enoyl moiety that is covalently linked to an acyl carrier protein (ACP). It confers resistance to triclosan. In Bacillus subtilis (strain 168), this protein is Enoyl-[acyl-carrier-protein] reductase [NADPH] FabL (fabL).